We begin with the raw amino-acid sequence, 205 residues long: H/ACA ribonucleoprotein complex subunit GAR1 (205 aa).

The segment covering 1–23 has biased composition (gly residues); sequence MSFRGGNRGGRGGFRGGFRGGRT. Residues 1–31 are disordered; it reads MSFRGGNRGGRGGFRGGFRGGRTGSARSFQQ. Arginine 4 bears the Asymmetric dimethylarginine; by HMT1 mark. The tract at residues 4 to 21 is RGG-box 1; that stretch reads RGGNRGGRGGFRGGFRGG. Asymmetric dimethylarginine; by HMT1; alternate is present on arginine 8. Arginine 8 is subject to Omega-N-methylarginine; by HMT1; alternate. Arginine 11 carries the asymmetric dimethylarginine; by HMT1 modification. Arginine 15 carries the post-translational modification Asymmetric dimethylarginine; by HMT1; alternate. Arginine 15 is subject to Omega-N-methylarginine; by HMT1; alternate. Position 19 is an asymmetric dimethylarginine; by HMT1 (arginine 19). Residue lysine 77 forms a Glycyl lysine isopeptide (Lys-Gly) (interchain with G-Cter in ubiquitin) linkage. Positions 124–205 are disordered; that stretch reads PKPKVVGPPK…SRGGFRGGRR (82 aa). The segment covering 143 to 205 has biased composition (gly residues); the sequence is APGGRGGASM…SRGGFRGGRR (63 aa). Residues arginine 147, arginine 154, and arginine 158 each carry the asymmetric dimethylarginine; by HMT1; alternate modification. Omega-N-methylarginine; by HMT1; alternate is present on residues arginine 147, arginine 154, and arginine 158. The interval 147–205 is RGG-box 2; it reads RGGASMGRGGSRGGFRGGRGGSSFRGGRGGSSFRGGSRGGSFRGGSRGGSRGGFRGGRR. Arginine 162 is subject to Asymmetric dimethylarginine; by HMT1. An Asymmetric dimethylarginine; by HMT1; alternate modification is found at arginine 165. Arginine 165 is modified (omega-N-methylarginine; by HMT1; alternate). 2 positions are modified to asymmetric dimethylarginine; by HMT1: arginine 171 and arginine 174. Arginine 180 and arginine 184 each carry omega-N-methylarginine; by HMT1. The residue at position 189 (arginine 189) is an Asymmetric dimethylarginine; by HMT1; alternate. Arginine 189 is modified (omega-N-methylarginine; by HMT1; alternate). Asymmetric dimethylarginine; by HMT1 occurs at positions 193, 197, and 201.

It belongs to the GAR1 family. As to quaternary structure, component of the small nucleolar ribonucleoprotein particles containing H/ACA-type snoRNAs (H/ACA snoRNPs). The protein component of the H/ACA snoRNP contains CBF5, GAR1, NHP2 and NOP10. The complex contains a stable core composed of CBF5 and NOP10, to which GAR1 and NHP2 subsequently bind. Interacts with snoRNAs. In terms of processing, methylated by HMT1, forming asymmetric dimethylarginines (DMA) within a domain referred to as an RGG box, made up of repeated Gly-Gly dipeptides interspersed with Arg and aromatic residues.

The protein localises to the nucleus. Its subcellular location is the nucleolus. Functionally, non-catalytic component of the H/ACA small nucleolar ribonucleoprotein (H/ACA snoRNP), which catalyzes pseudouridylation of rRNA and is required for ribosome biogenesis. This involves the isomerization of uridine such that the ribose is subsequently attached to C5, instead of the normal N1. Pseudouridine ('psi') residues may serve to stabilize the conformation of rRNAs. The H/ACA snoRNP complex also mediates pseudouridylation of other types of RNAs. The H/ACA snoRNP complex mediates pseudouridylation at position 93 in U2 snRNA. Essential for growth. The polypeptide is H/ACA ribonucleoprotein complex subunit GAR1 (Saccharomyces cerevisiae (strain ATCC 204508 / S288c) (Baker's yeast)).